Consider the following 469-residue polypeptide: Uronate isomerase (469 aa).

It belongs to the metallo-dependent hydrolases superfamily. Uronate isomerase family.

It carries out the reaction D-glucuronate = D-fructuronate. The enzyme catalyses aldehydo-D-galacturonate = keto-D-tagaturonate. The protein operates within carbohydrate metabolism; pentose and glucuronate interconversion. The chain is Uronate isomerase from Yersinia pseudotuberculosis serotype O:1b (strain IP 31758).